The chain runs to 976 residues: Collagen alpha-1(I) chain (976 aa).

Ser-1 is modified (phosphoserine). Residues 1 to 976 (SAGGISVPGP…PGPPGPPGPP (976 aa)) form a disordered region. 4-hydroxyproline is present on residues Pro-20, Pro-23, Pro-26, Pro-35, Pro-38, Pro-41, Pro-55, Pro-70, Pro-76, Pro-85, and Pro-91. Positions 58–72 (NGDDGEAGKPGRPGE) are enriched in basic and acidic residues. 5-hydroxylysine; alternate is present on Lys-94. A glycan (O-linked (Gal...) hydroxylysine; alternate) is linked at Lys-94. At Ser-100 the chain carries Phosphoserine. 2 stretches are compositionally biased toward low complexity: residues 108-118 (DAGPAGPKGAP) and 132-150 (PGASGPAGARGNDGATGAA). 4-hydroxyproline occurs at positions 118, 132, 153, 162, 165, 192, 195, 207, 213, 222, 228, 231, and 246. Pro residues predominate over residues 152–164 (PPGPTGPAGPPGF). A compositionally biased stretch (low complexity) spans 198–237 (AGAAGPAGNPGADGQPGAKGANGAPGIAGAPGFPGARGPS). Position 249 is a 5-hydroxylysine (Lys-249). 4-hydroxyproline occurs at positions 255, 258, 266, 275, 290, 296, 304, and 310. Over residues 294-308 (GLPGPGERGGPGSRG) the composition is skewed to gly residues. Lys-319 is subject to 5-hydroxylysine. 25 positions are modified to 4-hydroxyproline: Pro-328, Pro-337, Pro-343, Pro-349, Pro-358, Pro-361, Pro-370, Pro-379, Pro-385, Pro-397, Pro-406, Pro-415, Pro-418, Pro-436, Pro-453, Pro-459, Pro-465, Pro-471, Pro-477, Pro-483, Pro-495, Pro-504, Pro-517, Pro-523, and Pro-532. Low complexity predominate over residues 352–378 (KGLTGSPGSPGPDGKTGPPGPAGQDGR). A compositionally biased stretch (low complexity) spans 387–406 (ARGQAGVMGFPGPKGAAGEP). Low complexity predominate over residues 465–474 (PGEAGKPGEQ). Lys-544 carries the post-translational modification 5-hydroxylysine. Residues Pro-550, Pro-565, and Pro-571 each carry the 4-hydroxyproline modification. Residues 577 to 591 (SGPSGPAGPTGARGA) are compositionally biased toward low complexity. The residue at position 580 (Ser-580) is a Phosphoserine. 8 positions are modified to 4-hydroxyproline: Pro-592, Pro-598, Pro-601, Pro-610, Pro-616, Pro-634, Pro-643, and Pro-652. Positions 604 to 631 (AGFAGPPGADGQPGAKGEPGDAGAKGDA) are enriched in low complexity. Residue Lys-655 is modified to 5-hydroxylysine. The segment covering 660-676 (SAGPPGATGFPGAAGRV) has biased composition (low complexity). 4-hydroxyproline occurs at positions 664 and 670. Pro-678 carries the post-translational modification 3-hydroxyproline. A 4-hydroxyproline mark is found at Pro-679, Pro-688, Pro-691, Pro-718, Pro-726, Pro-735, Pro-753, Pro-762, Pro-765, Pro-771, Pro-786, Pro-792, Pro-798, Pro-806, and Pro-812. Residues 723-735 (KGSPGADGPAGAP) show a composition bias toward low complexity. Positions 785–795 (PPGPMGPPGLA) are enriched in pro residues. At Lys-821 the chain carries 5-hydroxylysine. A compositionally biased stretch (pro residues) spans 829-844 (PGPPGAPGAPGAPGPV). Pro-832, Pro-835, and Pro-838 each carry 4-hydroxyproline. The span at 864–878 (AGPAGARGPAGPQGP) shows a compositional bias: low complexity. Residues 879-893 (RGDKGETGEQGDRGI) are compositionally biased toward basic and acidic residues. Lys-882 is subject to 5-hydroxylysine. Lys-894 carries the post-translational modification 5-hydroxylysine; alternate. A glycan (O-linked (Gal...) hydroxylysine; alternate) is linked at Lys-894. Pro-907, Pro-910, Pro-928, and Pro-943 each carry 4-hydroxyproline. Positions 910 to 943 (PGEQGPSGASGPAGPRGPPGSAGSPGKDGLNGLP) are enriched in low complexity. The residue at position 948 (Pro-948) is a 3-hydroxyproline. Position 949 is a 4-hydroxyproline (Pro-949). The segment covering 961-976 (VGPPGPPGPPGPPGPP) has biased composition (pro residues). A 3-hydroxyproline modification is found at Pro-963. The residue at position 964 (Pro-964) is a 4-hydroxyproline. At Pro-966 the chain carries 3-hydroxyproline. Pro-967 bears the 4-hydroxyproline mark. Pro-969 is modified (3-hydroxyproline). Residues Pro-970, Pro-973, and Pro-976 each carry the 4-hydroxyproline modification.

This sequence belongs to the fibrillar collagen family. In terms of assembly, trimers of one alpha 2(I) and two alpha 1(I) chains. Post-translationally, contains mostly 4-hydroxyproline. Proline residues at the third position of the tripeptide repeating unit (G-X-Y) are hydroxylated in some or all of the chains. Contains 3-hydroxyproline at a few sites. This modification occurs on the first proline residue in the sequence motif Gly-Pro-Hyp, where Hyp is 4-hydroxyproline. In terms of processing, lysine residues at the third position of the tripeptide repeating unit (G-X-Y) are 5-hydroxylated in some or all of the chains. Post-translationally, O-glycosylated on hydroxylated lysine residues. The O-linked glycan consists of a Glc-Gal disaccharide. In terms of tissue distribution, expressed in bones.

It localises to the secreted. The protein localises to the extracellular space. Its subcellular location is the extracellular matrix. Its function is as follows. Type I collagen is a member of group I collagen (fibrillar forming collagen). The protein is Collagen alpha-1(I) chain of Acratocnus ye (Hispaniolan ground sloth).